A 295-amino-acid chain; its full sequence is Acetylglutamate kinase (295 aa).

Substrate-binding positions include 67 to 68, Arg-89, and Asn-191; that span reads GG.

The protein belongs to the acetylglutamate kinase family. ArgB subfamily.

Its subcellular location is the cytoplasm. It catalyses the reaction N-acetyl-L-glutamate + ATP = N-acetyl-L-glutamyl 5-phosphate + ADP. It functions in the pathway amino-acid biosynthesis; L-arginine biosynthesis; N(2)-acetyl-L-ornithine from L-glutamate: step 2/4. Catalyzes the ATP-dependent phosphorylation of N-acetyl-L-glutamate. The chain is Acetylglutamate kinase from Nitrosomonas eutropha (strain DSM 101675 / C91 / Nm57).